Here is a 584-residue protein sequence, read N- to C-terminus: DNA mismatch repair protein MutL (584 aa).

The protein belongs to the DNA mismatch repair MutL/HexB family.

This protein is involved in the repair of mismatches in DNA. It is required for dam-dependent methyl-directed DNA mismatch repair. May act as a 'molecular matchmaker', a protein that promotes the formation of a stable complex between two or more DNA-binding proteins in an ATP-dependent manner without itself being part of a final effector complex. This Buchnera aphidicola subsp. Acyrthosiphon pisum (strain Tuc7) protein is DNA mismatch repair protein MutL.